A 602-amino-acid chain; its full sequence is Elongation factor 4 (602 aa).

The 183-residue stretch at arginine 7–glutamine 189 folds into the tr-type G domain. Residues aspartate 19–threonine 24 and asparagine 136–aspartate 139 each bind GTP.

Belongs to the TRAFAC class translation factor GTPase superfamily. Classic translation factor GTPase family. LepA subfamily.

Its subcellular location is the cell inner membrane. It catalyses the reaction GTP + H2O = GDP + phosphate + H(+). Its function is as follows. Required for accurate and efficient protein synthesis under certain stress conditions. May act as a fidelity factor of the translation reaction, by catalyzing a one-codon backward translocation of tRNAs on improperly translocated ribosomes. Back-translocation proceeds from a post-translocation (POST) complex to a pre-translocation (PRE) complex, thus giving elongation factor G a second chance to translocate the tRNAs correctly. Binds to ribosomes in a GTP-dependent manner. This chain is Elongation factor 4, found in Xylella fastidiosa (strain 9a5c).